The chain runs to 396 residues: MAKEKFERNKPHVNIGTIGHVDHGKTSLTAAITKVLAKTGGATFLAYDLIDKAPEERERGITISTSHVEYQTSNRHYAHVDCPGHADYVKNMITGAAQMDGAILVVSAADGPMPQTREHILLARQVGVPYIVVFLNKVDMLDDPELRELVEMEVRDLLKKYEFPGDDIPIIPGSALKALEGDTSDIGEPAILKLMEAVDSYIPTPQRATDKPFLMPVEDVFSISGRGTVATGRVERGIIKVGEEVEVVGLRPTQKTVVTGVEMFRKLLDQGMAGDNIGALVRGLKREDMERGQVLAKPGSITPHTKFKAQIYVLSKEEGGRHTPFFKGYRPQFYFRTTDVTGSVKLPENVEMVMPGDNIAIEVELITPVAMEKELRFAVREGGRTVGAGVVAEIVE.

The region spanning 10–206 (KPHVNIGTIG…AVDSYIPTPQ (197 aa)) is the tr-type G domain. The tract at residues 19-26 (GHVDHGKT) is G1. Residue 19–26 (GHVDHGKT) participates in GTP binding. Residue Thr26 coordinates Mg(2+). Residues 60-64 (GITIS) are G2. Residues 81-84 (DCPG) are G3. GTP contacts are provided by residues 81–85 (DCPGH) and 136–139 (NKVD). Positions 136-139 (NKVD) are G4. Positions 174 to 176 (SAL) are G5.

The protein belongs to the TRAFAC class translation factor GTPase superfamily. Classic translation factor GTPase family. EF-Tu/EF-1A subfamily. As to quaternary structure, monomer.

Its subcellular location is the cytoplasm. The catalysed reaction is GTP + H2O = GDP + phosphate + H(+). Its function is as follows. GTP hydrolase that promotes the GTP-dependent binding of aminoacyl-tRNA to the A-site of ribosomes during protein biosynthesis. The protein is Elongation factor Tu 2 of Myxococcus xanthus (strain DK1622).